A 1263-amino-acid chain; its full sequence is DNA-directed RNA polymerase subunit beta (1263 aa).

It belongs to the RNA polymerase beta chain family. In terms of assembly, the RNAP catalytic core consists of 2 alpha, 1 beta, 1 beta' and 1 omega subunit. When a sigma factor is associated with the core the holoenzyme is formed, which can initiate transcription.

The enzyme catalyses RNA(n) + a ribonucleoside 5'-triphosphate = RNA(n+1) + diphosphate. In terms of biological role, DNA-dependent RNA polymerase catalyzes the transcription of DNA into RNA using the four ribonucleoside triphosphates as substrates. The sequence is that of DNA-directed RNA polymerase subunit beta from Thermotoga maritima (strain ATCC 43589 / DSM 3109 / JCM 10099 / NBRC 100826 / MSB8).